Here is a 155-residue protein sequence, read N- to C-terminus: Xanthine-guanine phosphoribosyltransferase (155 aa).

5-phospho-alpha-D-ribose 1-diphosphate is bound by residues 37–38 (RG), Arg69, and 90–98 (DDLVDTGGT). Residue Arg69 coordinates GMP. Asp91 contacts Mg(2+). Residues Asp94 and Ile137 each coordinate guanine. Xanthine is bound by residues Asp94 and Ile137. GMP is bound by residues 94–98 (DTGGT) and 136–137 (WI).

Belongs to the purine/pyrimidine phosphoribosyltransferase family. XGPT subfamily. In terms of assembly, homotetramer. Mg(2+) serves as cofactor.

Its subcellular location is the cell inner membrane. The enzyme catalyses GMP + diphosphate = guanine + 5-phospho-alpha-D-ribose 1-diphosphate. The catalysed reaction is XMP + diphosphate = xanthine + 5-phospho-alpha-D-ribose 1-diphosphate. It catalyses the reaction IMP + diphosphate = hypoxanthine + 5-phospho-alpha-D-ribose 1-diphosphate. The protein operates within purine metabolism; GMP biosynthesis via salvage pathway; GMP from guanine: step 1/1. Its pathway is purine metabolism; XMP biosynthesis via salvage pathway; XMP from xanthine: step 1/1. Purine salvage pathway enzyme that catalyzes the transfer of the ribosyl-5-phosphate group from 5-phospho-alpha-D-ribose 1-diphosphate (PRPP) to the N9 position of the 6-oxopurines guanine and xanthine to form the corresponding ribonucleotides GMP (guanosine 5'-monophosphate) and XMP (xanthosine 5'-monophosphate), with the release of PPi. To a lesser extent, also acts on hypoxanthine. The sequence is that of Xanthine-guanine phosphoribosyltransferase from Aeromonas salmonicida (strain A449).